The primary structure comprises 215 residues: Cytochrome b6 (215 aa).

A helical membrane pass occupies residues 32 to 52; that stretch reads IFYCLGGITLTCFLIQFATGF. Heme c is bound at residue Cys-35. Residues His-86 and His-100 each contribute to the heme b site. The next 3 membrane-spanning stretches (helical) occupy residues 90–110, 116–136, and 186–206; these read ASMM…TGGF, LTWV…VTGY, and LHTF…FLMI. Heme b-binding residues include His-187 and His-202.

The protein belongs to the cytochrome b family. PetB subfamily. The 4 large subunits of the cytochrome b6-f complex are cytochrome b6, subunit IV (17 kDa polypeptide, PetD), cytochrome f and the Rieske protein, while the 4 small subunits are PetG, PetL, PetM and PetN. The complex functions as a dimer. The cofactor is heme b. It depends on heme c as a cofactor.

Its subcellular location is the cellular thylakoid membrane. Its function is as follows. Component of the cytochrome b6-f complex, which mediates electron transfer between photosystem II (PSII) and photosystem I (PSI), cyclic electron flow around PSI, and state transitions. The chain is Cytochrome b6 from Synechococcus elongatus.